A 129-amino-acid chain; its full sequence is MALEYPPHLRYVDTHEYIRVEDDIAVIGITAYAVDQLGDIVFVGLPEEGTEIEKGESFGSVESVKAVEDLYAPVSGKVVAVNKAVVDSPESIADDPYGDGWLIKVRMTNPEDLDDTMSAEAYASLVEGS.

A Lipoyl-binding domain is found at 24 to 106 (IAVIGITAYA…YGDGWLIKVR (83 aa)). The residue at position 65 (K65) is an N6-lipoyllysine.

Belongs to the GcvH family. In terms of assembly, the glycine cleavage system is composed of four proteins: P, T, L and H. (R)-lipoate serves as cofactor.

The glycine cleavage system catalyzes the degradation of glycine. The H protein shuttles the methylamine group of glycine from the P protein to the T protein. This chain is Glycine cleavage system H protein, found in Synechococcus sp. (strain JA-3-3Ab) (Cyanobacteria bacterium Yellowstone A-Prime).